We begin with the raw amino-acid sequence, 157 residues long: MKILGIDPGTKNCGYAILEKSKFKTILLEAGLIKIKPNTLQYQITELCEGLDLIFKNHKFDEVAIEDIFFAYNPKTVLKLAQFRGALSLKILQLHGDFAEYTPLQVKKTVTGKAKADKEQVAFMVKKILGINKEIKPLDITDAIAIALTHANNLRIN.

Catalysis depends on residues D7, E66, and D139. D7, E66, and D139 together coordinate Mg(2+).

This sequence belongs to the RuvC family. Homodimer which binds Holliday junction (HJ) DNA. The HJ becomes 2-fold symmetrical on binding to RuvC with unstacked arms; it has a different conformation from HJ DNA in complex with RuvA. In the full resolvosome a probable DNA-RuvA(4)-RuvB(12)-RuvC(2) complex forms which resolves the HJ. Mg(2+) is required as a cofactor.

Its subcellular location is the cytoplasm. It carries out the reaction Endonucleolytic cleavage at a junction such as a reciprocal single-stranded crossover between two homologous DNA duplexes (Holliday junction).. The RuvA-RuvB-RuvC complex processes Holliday junction (HJ) DNA during genetic recombination and DNA repair. Endonuclease that resolves HJ intermediates. Cleaves cruciform DNA by making single-stranded nicks across the HJ at symmetrical positions within the homologous arms, yielding a 5'-phosphate and a 3'-hydroxyl group; requires a central core of homology in the junction. The consensus cleavage sequence is 5'-(A/T)TT(C/G)-3'. Cleavage occurs on the 3'-side of the TT dinucleotide at the point of strand exchange. HJ branch migration catalyzed by RuvA-RuvB allows RuvC to scan DNA until it finds its consensus sequence, where it cleaves and resolves the cruciform DNA. The polypeptide is Crossover junction endodeoxyribonuclease RuvC (Campylobacter concisus (strain 13826)).